Consider the following 893-residue polypeptide: Translation initiation factor IF-2 (893 aa).

Disordered stretches follow at residues 135–169 and 201–300; these read KAKA…KAEE and ENEK…ESMD. Residues 201–224 are compositionally biased toward basic and acidic residues; the sequence is ENEKRWAEEEKARKEAEKTVDHHV. Residues 251–265 are compositionally biased toward low complexity; sequence PSANAGNNANANAGA. The tr-type G domain maps to 393-562; it reads SRAPVVTIMG…LLEAEVLELK (170 aa). Residues 402 to 409 are G1; the sequence is GHVDHGKT. 402–409 serves as a coordination point for GTP; sequence GHVDHGKT. Positions 427 to 431 are G2; it reads GITQH. Residues 448-451 are G3; it reads DTPG. Residues 448 to 452 and 502 to 505 each bind GTP; these read DTPGH and NKMD. The segment at 502–505 is G4; that stretch reads NKMD. The tract at residues 538-540 is G5; sequence SAK.

The protein belongs to the TRAFAC class translation factor GTPase superfamily. Classic translation factor GTPase family. IF-2 subfamily.

The protein resides in the cytoplasm. One of the essential components for the initiation of protein synthesis. Protects formylmethionyl-tRNA from spontaneous hydrolysis and promotes its binding to the 30S ribosomal subunits. Also involved in the hydrolysis of GTP during the formation of the 70S ribosomal complex. The sequence is that of Translation initiation factor IF-2 from Shewanella halifaxensis (strain HAW-EB4).